Reading from the N-terminus, the 284-residue chain is Pantothenate synthetase (284 aa).

30–37 (MGNLHEGH) is a binding site for ATP. Residue H37 is the Proton donor of the active site. Q61 serves as a coordination point for (R)-pantoate. Q61 contributes to the beta-alanine binding site. 149–152 (GEKD) provides a ligand contact to ATP. Q155 contacts (R)-pantoate. ATP is bound by residues V178 and 186-189 (LSSR).

This sequence belongs to the pantothenate synthetase family. Homodimer.

The protein resides in the cytoplasm. The catalysed reaction is (R)-pantoate + beta-alanine + ATP = (R)-pantothenate + AMP + diphosphate + H(+). It functions in the pathway cofactor biosynthesis; (R)-pantothenate biosynthesis; (R)-pantothenate from (R)-pantoate and beta-alanine: step 1/1. In terms of biological role, catalyzes the condensation of pantoate with beta-alanine in an ATP-dependent reaction via a pantoyl-adenylate intermediate. In Yersinia pseudotuberculosis serotype O:1b (strain IP 31758), this protein is Pantothenate synthetase.